The sequence spans 101 residues: Small ribosomal subunit protein uS14 (101 aa).

This sequence belongs to the universal ribosomal protein uS14 family. As to quaternary structure, part of the 30S ribosomal subunit. Contacts proteins S3 and S10.

Functionally, binds 16S rRNA, required for the assembly of 30S particles and may also be responsible for determining the conformation of the 16S rRNA at the A site. This is Small ribosomal subunit protein uS14 from Gluconacetobacter diazotrophicus (strain ATCC 49037 / DSM 5601 / CCUG 37298 / CIP 103539 / LMG 7603 / PAl5).